The sequence spans 432 residues: Adenylosuccinate synthetase (432 aa).

GTP-binding positions include G12–K18 and G40–T42. Residue D13 is the Proton acceptor of the active site. Residues D13 and G40 each coordinate Mg(2+). Residues D13 to K16, N38 to H41, T132, R146, Q226, T241, and R305 contribute to the IMP site. The Proton donor role is filled by H41. V301–R307 provides a ligand contact to substrate. GTP contacts are provided by residues R307, K333–D335, and S415–S417.

Belongs to the adenylosuccinate synthetase family. As to quaternary structure, homodimer. Mg(2+) is required as a cofactor.

It localises to the cytoplasm. It carries out the reaction IMP + L-aspartate + GTP = N(6)-(1,2-dicarboxyethyl)-AMP + GDP + phosphate + 2 H(+). It participates in purine metabolism; AMP biosynthesis via de novo pathway; AMP from IMP: step 1/2. Its function is as follows. Plays an important role in the de novo pathway of purine nucleotide biosynthesis. Catalyzes the first committed step in the biosynthesis of AMP from IMP. The chain is Adenylosuccinate synthetase from Rhizobium etli (strain CIAT 652).